The chain runs to 184 residues: Troponin I, slow skeletal muscle (184 aa).

P1 carries the post-translational modification N-acetylproline; partial. The tract at residues 1-45 (PEVERKSKITASRKLLKSLMLAKAKECQQEHEAREAEKVRYLAER) is involved in binding TNC. Residue S55 is modified to Phosphoserine. The segment at 94–115 (LKLKVLDLRGKFKRPPLRRVRV) is involved in binding TNC and actin.

It belongs to the troponin I family. In terms of assembly, binds to actin and tropomyosin. In terms of processing, in the muscle sample, approximately 25% of the chains were blocked. Pro-1 is probably acetylated. Post-translationally, the N-terminus is blocked.

Its function is as follows. Troponin I is the inhibitory subunit of troponin, the thin filament regulatory complex which confers calcium-sensitivity to striated muscle actomyosin ATPase activity. This Oryctolagus cuniculus (Rabbit) protein is Troponin I, slow skeletal muscle (TNNI1).